The following is a 396-amino-acid chain: Phosphoglycerate kinase (396 aa).

Residues 21–23 (DFN), R37, 60–63 (HLGR), R121, and R154 contribute to the substrate site. ATP-binding positions include K205, G296, E327, and 353 to 356 (GGDS).

Belongs to the phosphoglycerate kinase family. In terms of assembly, monomer.

It localises to the cytoplasm. The catalysed reaction is (2R)-3-phosphoglycerate + ATP = (2R)-3-phospho-glyceroyl phosphate + ADP. It participates in carbohydrate degradation; glycolysis; pyruvate from D-glyceraldehyde 3-phosphate: step 2/5. This is Phosphoglycerate kinase from Anaeromyxobacter dehalogenans (strain 2CP-C).